The sequence spans 325 residues: GMP reductase (325 aa).

Residue Cys-174 is the Thioimidate intermediate of the active site. NADP(+) is bound at residue Leu-203–Val-226.

This sequence belongs to the IMPDH/GMPR family. GuaC type 2 subfamily.

The catalysed reaction is IMP + NH4(+) + NADP(+) = GMP + NADPH + 2 H(+). In terms of biological role, catalyzes the irreversible NADPH-dependent deamination of GMP to IMP. It functions in the conversion of nucleobase, nucleoside and nucleotide derivatives of G to A nucleotides, and in maintaining the intracellular balance of A and G nucleotides. The protein is GMP reductase of Staphylococcus aureus (strain bovine RF122 / ET3-1).